Reading from the N-terminus, the 37-residue chain is Small ribosomal subunit protein eS32 (37 aa).

This sequence belongs to the eukaryotic ribosomal protein eS32 family. In terms of assembly, part of the small ribosomal subunit.

Interacts with N(4)-acetylcytidine (ac(4)C) 1459 of the small rRNA; the acetyl group of ac(4)C1459 briges the interaction with this protein. This is Small ribosomal subunit protein eS32 (rpl41e) from Thermococcus kodakarensis (strain ATCC BAA-918 / JCM 12380 / KOD1) (Pyrococcus kodakaraensis (strain KOD1)).